A 66-amino-acid polypeptide reads, in one-letter code: Small ribosomal subunit protein bS21 (66 aa).

It belongs to the bacterial ribosomal protein bS21 family.

This Rickettsia felis (strain ATCC VR-1525 / URRWXCal2) (Rickettsia azadi) protein is Small ribosomal subunit protein bS21.